The primary structure comprises 465 residues: Cysteine--tRNA ligase (465 aa).

C27 contacts Zn(2+). The short motif at 29–39 (PTVYNFFHIGN) is the 'HIGH' region element. The Zn(2+) site is built by C207, H232, and E236. The 'KMSKS' region signature appears at 264–268 (KMSKS). K267 contributes to the ATP binding site.

This sequence belongs to the class-I aminoacyl-tRNA synthetase family. As to quaternary structure, monomer. Zn(2+) serves as cofactor.

The protein resides in the cytoplasm. The enzyme catalyses tRNA(Cys) + L-cysteine + ATP = L-cysteinyl-tRNA(Cys) + AMP + diphosphate. The sequence is that of Cysteine--tRNA ligase from Clostridium botulinum (strain Kyoto / Type A2).